Here is a 395-residue protein sequence, read N- to C-terminus: uncharacterized protein (395 aa).

The stretch at 288 to 318 (VAKGKEIDNAEIEKTIKEYENIEEGIEDIVK) forms a coiled coil.

This is an uncharacterized protein from Ostreid herpesvirus 1 (isolate France) (OsHV-1).